The following is a 296-amino-acid chain: UDP-N-acetylenolpyruvoylglucosamine reductase (296 aa).

One can recognise an FAD-binding PCMH-type domain in the interval 19 to 203 (KVGGFAEYFS…LETTQKNLKK (185 aa)). The active site involves R166. The Proton donor role is filled by S217. E287 is an active-site residue.

Belongs to the MurB family. FAD serves as cofactor.

The protein resides in the cytoplasm. It carries out the reaction UDP-N-acetyl-alpha-D-muramate + NADP(+) = UDP-N-acetyl-3-O-(1-carboxyvinyl)-alpha-D-glucosamine + NADPH + H(+). The protein operates within cell wall biogenesis; peptidoglycan biosynthesis. In terms of biological role, cell wall formation. The protein is UDP-N-acetylenolpyruvoylglucosamine reductase of Prochlorococcus marinus subsp. pastoris (strain CCMP1986 / NIES-2087 / MED4).